A 145-amino-acid polypeptide reads, in one-letter code: Deoxyuridine 5'-triphosphate nucleotidohydrolase (145 aa).

The protein belongs to the dUTPase family. Requires Mg(2+) as cofactor.

The catalysed reaction is dUTP + H2O = dUMP + diphosphate + H(+). Its function is as follows. This enzyme is involved in nucleotide metabolism: it produces dUMP, the immediate precursor of thymidine nucleotides and it decreases the intracellular concentration of dUTP so that uracil cannot be incorporated into DNA. The polypeptide is Deoxyuridine 5'-triphosphate nucleotidohydrolase (DUT) (Fowlpox virus (strain NVSL) (FPV)).